We begin with the raw amino-acid sequence, 213 residues long: Thiamine-phosphate synthase (213 aa).

Residues 43–47 and asparagine 74 each bind 4-amino-2-methyl-5-(diphosphooxymethyl)pyrimidine; that span reads QLRDK. Mg(2+) is bound by residues aspartate 75 and aspartate 94. Serine 113 lines the 4-amino-2-methyl-5-(diphosphooxymethyl)pyrimidine pocket. 142–144 serves as a coordination point for 2-[(2R,5Z)-2-carboxy-4-methylthiazol-5(2H)-ylidene]ethyl phosphate; it reads TAT. Position 145 (lysine 145) interacts with 4-amino-2-methyl-5-(diphosphooxymethyl)pyrimidine. Residues glycine 173 and 193 to 194 contribute to the 2-[(2R,5Z)-2-carboxy-4-methylthiazol-5(2H)-ylidene]ethyl phosphate site; that span reads VS.

The protein belongs to the thiamine-phosphate synthase family. Mg(2+) serves as cofactor.

It catalyses the reaction 2-[(2R,5Z)-2-carboxy-4-methylthiazol-5(2H)-ylidene]ethyl phosphate + 4-amino-2-methyl-5-(diphosphooxymethyl)pyrimidine + 2 H(+) = thiamine phosphate + CO2 + diphosphate. The catalysed reaction is 2-(2-carboxy-4-methylthiazol-5-yl)ethyl phosphate + 4-amino-2-methyl-5-(diphosphooxymethyl)pyrimidine + 2 H(+) = thiamine phosphate + CO2 + diphosphate. It carries out the reaction 4-methyl-5-(2-phosphooxyethyl)-thiazole + 4-amino-2-methyl-5-(diphosphooxymethyl)pyrimidine + H(+) = thiamine phosphate + diphosphate. It functions in the pathway cofactor biosynthesis; thiamine diphosphate biosynthesis; thiamine phosphate from 4-amino-2-methyl-5-diphosphomethylpyrimidine and 4-methyl-5-(2-phosphoethyl)-thiazole: step 1/1. Condenses 4-methyl-5-(beta-hydroxyethyl)thiazole monophosphate (THZ-P) and 2-methyl-4-amino-5-hydroxymethyl pyrimidine pyrophosphate (HMP-PP) to form thiamine monophosphate (TMP). The chain is Thiamine-phosphate synthase from Psychrobacter sp. (strain PRwf-1).